Consider the following 186-residue polypeptide: Ribosome-recycling factor (186 aa).

Belongs to the RRF family.

It localises to the cytoplasm. Its function is as follows. Responsible for the release of ribosomes from messenger RNA at the termination of protein biosynthesis. May increase the efficiency of translation by recycling ribosomes from one round of translation to another. The protein is Ribosome-recycling factor of Rickettsia rickettsii (strain Iowa).